A 319-amino-acid chain; its full sequence is Ribonuclease Z (319 aa).

Zn(2+)-binding residues include His-62, His-64, Asp-66, His-67, His-145, Asp-216, and His-274. Asp-66 functions as the Proton acceptor in the catalytic mechanism.

It belongs to the RNase Z family. Homodimer. It depends on Zn(2+) as a cofactor.

It carries out the reaction Endonucleolytic cleavage of RNA, removing extra 3' nucleotides from tRNA precursor, generating 3' termini of tRNAs. A 3'-hydroxy group is left at the tRNA terminus and a 5'-phosphoryl group is left at the trailer molecule.. In terms of biological role, zinc phosphodiesterase, which displays some tRNA 3'-processing endonuclease activity. Probably involved in tRNA maturation, by removing a 3'-trailer from precursor tRNA. This chain is Ribonuclease Z, found in Parasynechococcus marenigrum (strain WH8102).